A 441-amino-acid polypeptide reads, in one-letter code: G-protein coupled receptor family C group 5 member C (441 aa).

The first 23 residues, 1-23 (MAIHKALVMCLGLPLFLFPGAWA), serve as a signal peptide directing secretion. The Extracellular segment spans residues 24–50 (QGHVPPGCSQGLNPLYYNLCDRSGAWG). A helical transmembrane segment spans residues 51 to 71 (IVLEAVAGAGIVTTFVLTIIL). Residues 72–85 (VASLPFVQDTKKRS) are Cytoplasmic-facing. The chain crosses the membrane as a helical span at residues 86-106 (LLGTQVFFLLGTLGLFCLVFA). The Extracellular portion of the chain corresponds to 107 to 120 (CVVKPDFSTCASRR). The helical transmembrane segment at 121-141 (FLFGVLFAICFSCLAAHVFAL) threads the bilayer. Over 142 to 155 (NFLARKNHGPRGWV) the chain is Cytoplasmic. The helical transmembrane segment at 156–176 (IFTVALLLTLVEVIINTEWLI) threads the bilayer. At 177–208 (ITLVRGSGEGGPQGNSSAGWAVASPCAIANMD) the chain is on the extracellular side. A glycan (N-linked (GlcNAc...) asparagine) is linked at N191. The helical transmembrane segment at 209–229 (FVMALIYVMLLLLGAFLGAWP) threads the bilayer. The Cytoplasmic segment spans residues 230–241 (ALCGRYKRWRKH). Residues 242–262 (GVFVLLTTATSVAIWVVWIVM) form a helical membrane-spanning segment. Over 263–279 (YTYGNKQHNSPTWDDPT) the chain is Extracellular. A helical membrane pass occupies residues 280-300 (LAIALAANAWAFVLFYVIPEV). The Cytoplasmic portion of the chain corresponds to 301-441 (SQVTKSSPEQ…QVFRNPYVWD (141 aa)). S344, S383, S403, and S406 each carry phosphoserine. The segment at 412–441 (DMYSAQSHQAATPPKDGKNSQVFRNPYVWD) is disordered. Y414 carries the post-translational modification Phosphotyrosine. The residue at position 423 (T423) is a Phosphothreonine.

This sequence belongs to the G-protein coupled receptor 3 family. In terms of tissue distribution, expression is highest in the periphery, particularly in the stomach, but also in the kidney, liver, pancreas, and prostate. In brain, levels of expression are generally lower than in the periphery, with the exception of cerebellum, spinal cord, and dorsal root ganglia (DRG).

Its subcellular location is the cell membrane. It is found in the cytoplasmic vesicle membrane. Functionally, this retinoic acid-inducible G-protein coupled receptor provide evidence for a possible interaction between retinoid and G-protein signaling pathways. The sequence is that of G-protein coupled receptor family C group 5 member C (GPRC5C) from Homo sapiens (Human).